The chain runs to 113 residues: Crustacean hyperglycemic hormones B (113 aa).

The first 26 residues, 1–26, serve as a signal peptide directing secretion; that stretch reads MVAFRMMSMALLVVVASSWWASPVEA. 3 disulfides stabilise this stretch: Cys-46–Cys-82, Cys-62–Cys-78, and Cys-65–Cys-91. Residue Val-111 is modified to Valine amide.

This sequence belongs to the arthropod CHH/MIH/GIH/VIH hormone family. Expressed at a constant level in the eyestalks of juveniles and mature females. A low level expression is seen in the central nervous system.

The protein localises to the secreted. Functionally, hormone found in the sinus gland of isopods and decapods which controls the blood sugar level. Has a secretagogue action over the amylase released from the midgut gland. May act as a stress hormone and may be involved in the control of molting and reproduction. The chain is Crustacean hyperglycemic hormones B from Metapenaeus ensis (Greasyback shrimp).